The chain runs to 397 residues: Elongation factor Tu (397 aa).

Residues 10-206 (KPHVNIGTIG…AIDSYIPTPE (197 aa)) form the tr-type G domain. Positions 19 to 26 (GHVDHGKT) are G1. Residue 19-26 (GHVDHGKT) coordinates GTP. Threonine 26 contributes to the Mg(2+) binding site. The segment at 60–64 (GITIN) is G2. The segment at 81–84 (DCPG) is G3. GTP is bound by residues 81-85 (DCPGH) and 136-139 (NKAD). The interval 136-139 (NKAD) is G4. The interval 174-176 (SAL) is G5.

This sequence belongs to the TRAFAC class translation factor GTPase superfamily. Classic translation factor GTPase family. EF-Tu/EF-1A subfamily. As to quaternary structure, monomer.

Its subcellular location is the cytoplasm. It catalyses the reaction GTP + H2O = GDP + phosphate + H(+). Its function is as follows. GTP hydrolase that promotes the GTP-dependent binding of aminoacyl-tRNA to the A-site of ribosomes during protein biosynthesis. This is Elongation factor Tu from Clostridium botulinum (strain ATCC 19397 / Type A).